Here is a 443-residue protein sequence, read N- to C-terminus: ATP-dependent protease ATPase subunit HslU (443 aa).

Residues isoleucine 18, 60-65, aspartate 256, glutamate 321, and arginine 393 each bind ATP; that span reads GVGKTE.

Belongs to the ClpX chaperone family. HslU subfamily. A double ring-shaped homohexamer of HslV is capped on each side by a ring-shaped HslU homohexamer. The assembly of the HslU/HslV complex is dependent on binding of ATP.

It localises to the cytoplasm. Its function is as follows. ATPase subunit of a proteasome-like degradation complex; this subunit has chaperone activity. The binding of ATP and its subsequent hydrolysis by HslU are essential for unfolding of protein substrates subsequently hydrolyzed by HslV. HslU recognizes the N-terminal part of its protein substrates and unfolds these before they are guided to HslV for hydrolysis. The protein is ATP-dependent protease ATPase subunit HslU of Vibrio parahaemolyticus serotype O3:K6 (strain RIMD 2210633).